The sequence spans 172 residues: Interferon tau-3 (172 aa).

2 disulfides stabilise this stretch: C1–C99 and C29–C139.

This sequence belongs to the alpha/beta interferon family. IFN-alphaII subfamily. Constitutively and exclusively expressed in the mononuclear cells of the extraembryonic trophectoderm.

Its subcellular location is the secreted. Functionally, paracrine hormone primarily responsible for maternal recognition of pregnancy. Interacts with endometrial receptors, probably type I interferon receptors, and blocks estrogen receptor expression, preventing the estrogen-induced increase in oxytocin receptor expression in the endometrium. This results in the suppression of the pulsatile endometrial release of the luteolytic hormone prostaglandin F2-alpha, hindering the regression of the corpus luteum (luteolysis) and therefore a return to ovarian cyclicity. This, and a possible direct effect of IFN-tau on prostaglandin synthesis, leads in turn to continued ovarian progesterone secretion, which stimulates the secretion by the endometrium of the nutrients required for the growth of the conceptus. In summary, displays particularly high antiviral and antiproliferative potency concurrently with particular weak cytotoxicity, high antiluteolytic activity and immunomodulatory properties. In contrast with other IFNs, IFN-tau is not virally inducible. This Ovis aries (Sheep) protein is Interferon tau-3 (IFNT3).